Consider the following 393-residue polypeptide: Protein DDI1 homolog 2 (393 aa).

The 81-residue stretch at 1-81 (MLITVYCVRR…VILRQKEAPE (81 aa)) folds into the Ubiquitin-like domain. The disordered stretch occupies residues 82-127 (TRPAAPFPGLDFSTIAVPGASSQPDPSQPQAPPPPPDTSSFPQGLD). Residues 107-118 (PSQPQAPPPPPD) are compositionally biased toward pro residues. The active site involves Asp-246. A Ubiquitin-binding motif is present at residues 370 to 389 (EEIADRELAEVLQKSADEAD).

This sequence belongs to the DDI1 family. As to quaternary structure, homodimer.

The protein resides in the cytoplasm. Its subcellular location is the cytosol. It localises to the chromosome. Functionally, aspartic protease that mediates the cleavage of NFE2L1/NRF1 at 'Leu-104', thereby promoting release of NFE2L1/NRF1 from the endoplasmic reticulum membrane. Ubiquitination of NFE2L1/NRF1 is a prerequisite for cleavage, suggesting that DDI2 specifically recognizes and binds ubiquitinated NFE2L1/NRF1. Seems to act as a proteasomal shuttle which links the proteasome and replication fork proteins like RTF2. Required for cellular survival following replication stress. The chain is Protein DDI1 homolog 2 (ddi2) from Xenopus laevis (African clawed frog).